A 235-amino-acid polypeptide reads, in one-letter code: MWVNKYIDDCTDEDLNDRDFIASVVDRAIFHFAINSICNPGDNKDAMPIEQCTFDVETKNDLPSTVQLFYEESKDNEPLANIHFQAIGSGFLTFVNACQEHDDNSLKLFASLLISLSYSSAYADLSETVYINENNESYLKAQFEKLSQRDMKKYLGEMKRLADGGEMNFDGYLDKMSHLVNEGTLDPDILSKMRDAAPQLISFAKSFDPTSKEEIKILTDTSKLIYDLFGVKSEK.

This is an uncharacterized protein from Escherichia coli (strain K12).